The sequence spans 236 residues: Purine nucleoside phosphorylase DeoD-type (236 aa).

An a purine D-ribonucleoside-binding site is contributed by H5. Phosphate contacts are provided by residues G21, R25, R44, and 88-91; that span reads RVGT. Residues 180 to 182 and 204 to 205 each bind a purine D-ribonucleoside; these read EME and SD. Catalysis depends on D205, which acts as the Proton donor.

It belongs to the PNP/UDP phosphorylase family. As to quaternary structure, homohexamer; trimer of homodimers.

It catalyses the reaction a purine D-ribonucleoside + phosphate = a purine nucleobase + alpha-D-ribose 1-phosphate. It carries out the reaction a purine 2'-deoxy-D-ribonucleoside + phosphate = a purine nucleobase + 2-deoxy-alpha-D-ribose 1-phosphate. In terms of biological role, catalyzes the reversible phosphorolytic breakdown of the N-glycosidic bond in the beta-(deoxy)ribonucleoside molecules, with the formation of the corresponding free purine bases and pentose-1-phosphate. The protein is Purine nucleoside phosphorylase DeoD-type of Shewanella loihica (strain ATCC BAA-1088 / PV-4).